We begin with the raw amino-acid sequence, 166 residues long: MGPSSAFLGVLFLSGTLGLTTSPARGRLRCYTCSFAKPCDPVPRECREDEVCGVSVGTSGRTLVRWPFSRWLLSFLPMAAAATSAFLFCPTEQKEEEVIERKGCLPRAQCPLLGHATYWSRSYSLRHQCCEQDLCNAAASQPPPNLPLMTLLPLAAMIGWGVHDFL.

Positions 1-18 (MGPSSAFLGVLFLSGTLG) are cleaved as a signal peptide. In terms of domain architecture, UPAR/Ly6 spans 28–151 (LRCYTCSFAK…PPPNLPLMTL (124 aa)). Cystine bridges form between Cys-30–Cys-52, Cys-33–Cys-39, Cys-110–Cys-129, and Cys-130–Cys-135.

In terms of assembly, interacts with CHRNA4. In terms of processing, O-glycosylated. Contains sialic acid residues.

Its subcellular location is the cell surface. It is found in the cell membrane. The protein resides in the cell projection. In terms of biological role, believed to act as a modulator of nicotinic acetylcholine receptors (nAChRs) activity. In vitro potentiates alpha-3:beta-4-containing nAChRs maximum response by increasing peak current and slowing down receptor desensitization; the activity is dependent on its cell surface localization. This Mus musculus (Mouse) protein is Lymphocyte antigen 6G6e (Ly6g6e).